The chain runs to 557 residues: Phosphomethylpyrimidine synthase (557 aa).

Substrate is bound by residues asparagine 197, methionine 226, tyrosine 255, histidine 291, 311–313 (SRG), 352–355 (DGLR), and glutamate 391. A Zn(2+)-binding site is contributed by histidine 395. Substrate is bound at residue tyrosine 418. Histidine 459 provides a ligand contact to Zn(2+). Cysteine 539, cysteine 542, and cysteine 547 together coordinate [4Fe-4S] cluster.

It belongs to the ThiC family. In terms of assembly, homodimer. Requires [4Fe-4S] cluster as cofactor.

The catalysed reaction is 5-amino-1-(5-phospho-beta-D-ribosyl)imidazole + S-adenosyl-L-methionine = 4-amino-2-methyl-5-(phosphooxymethyl)pyrimidine + CO + 5'-deoxyadenosine + formate + L-methionine + 3 H(+). It participates in cofactor biosynthesis; thiamine diphosphate biosynthesis. Its function is as follows. Catalyzes the synthesis of the hydroxymethylpyrimidine phosphate (HMP-P) moiety of thiamine from aminoimidazole ribotide (AIR) in a radical S-adenosyl-L-methionine (SAM)-dependent reaction. The polypeptide is Phosphomethylpyrimidine synthase (Anaplasma phagocytophilum (strain HZ)).